The primary structure comprises 322 residues: Porphobilinogen deaminase (322 aa).

At C254 the chain carries S-(dipyrrolylmethanemethyl)cysteine.

The protein belongs to the HMBS family. Monomer. Dipyrromethane is required as a cofactor.

It catalyses the reaction 4 porphobilinogen + H2O = hydroxymethylbilane + 4 NH4(+). Its pathway is porphyrin-containing compound metabolism; protoporphyrin-IX biosynthesis; coproporphyrinogen-III from 5-aminolevulinate: step 2/4. Its function is as follows. Tetrapolymerization of the monopyrrole PBG into the hydroxymethylbilane pre-uroporphyrinogen in several discrete steps. This chain is Porphobilinogen deaminase, found in Methylococcus capsulatus (strain ATCC 33009 / NCIMB 11132 / Bath).